Here is a 54-residue protein sequence, read N- to C-terminus: Light-harvesting protein B-880 beta chain (54 aa).

Residues 1 to 20 (AEDRSSLSGVSDAEAKEFHA) lie on the Cytoplasmic side of the membrane. Residues His-19 and His-37 each contribute to the a bacteriochlorophyll site. The chain crosses the membrane as a helical span at residues 21 to 43 (LFVSSFMGFMVVAVLAHVLAWAW). The Periplasmic segment spans residues 44 to 54 (RPWIPGPKGWA).

It belongs to the antenna complex beta subunit family. The core complex is formed by different alpha and beta chains, binding bacteriochlorophyll molecules, and arranged most probably in tetrameric structures disposed around the reaction center. The non-pigmented gamma chains may constitute additional components.

It is found in the cell inner membrane. Its function is as follows. Antenna complexes are light-harvesting systems, which transfer the excitation energy to the reaction centers. This Rhodoblastus acidophilus (Rhodopseudomonas acidophila) protein is Light-harvesting protein B-880 beta chain.